A 539-amino-acid chain; its full sequence is CTP synthase (539 aa).

An amidoligase domain region spans residues 1–268; sequence MADTKYIFVT…DETVLRKVGL (268 aa). Ser15 is a CTP binding site. UTP is bound at residue Ser15. 16–21 is a binding site for ATP; sequence SLGKGI. Position 56 (Tyr56) interacts with L-glutamine. ATP is bound at residue Asp73. Mg(2+)-binding residues include Asp73 and Glu143. Residues 150 to 152, 189 to 194, and Lys225 contribute to the CTP site; these read DIE and KTKPTQ. UTP contacts are provided by residues 189–194 and Lys225; that span reads KTKPTQ. The Glutamine amidotransferase type-1 domain occupies 294-536; it reads TIALVGKYVE…IREAIKTRKK (243 aa). Gly356 is a binding site for L-glutamine. The Nucleophile; for glutamine hydrolysis role is filled by Cys383. Residues 384 to 387, Glu407, and Arg464 contribute to the L-glutamine site; that span reads LGMQ. Active-site residues include His509 and Glu511.

The protein belongs to the CTP synthase family. In terms of assembly, homotetramer.

It carries out the reaction UTP + L-glutamine + ATP + H2O = CTP + L-glutamate + ADP + phosphate + 2 H(+). It catalyses the reaction L-glutamine + H2O = L-glutamate + NH4(+). The enzyme catalyses UTP + NH4(+) + ATP = CTP + ADP + phosphate + 2 H(+). It participates in pyrimidine metabolism; CTP biosynthesis via de novo pathway; CTP from UDP: step 2/2. Its activity is regulated as follows. Allosterically activated by GTP, when glutamine is the substrate; GTP has no effect on the reaction when ammonia is the substrate. The allosteric effector GTP functions by stabilizing the protein conformation that binds the tetrahedral intermediate(s) formed during glutamine hydrolysis. Inhibited by the product CTP, via allosteric rather than competitive inhibition. Functionally, catalyzes the ATP-dependent amination of UTP to CTP with either L-glutamine or ammonia as the source of nitrogen. Regulates intracellular CTP levels through interactions with the four ribonucleotide triphosphates. The sequence is that of CTP synthase from Porphyromonas gingivalis (strain ATCC BAA-308 / W83).